A 236-amino-acid polypeptide reads, in one-letter code: MTINALLLSSSRVGDTPYLAHAIPFIKPLTTQAQKWIFIPYAGVSMSYDTYLASVVMGLAELNLDISGIHQHPDPCQAIKDADGILIGGGNTFHLLHELYRYNLINLIREKVAQGTPYVGWSAGANVSGASIKTTNDMPIIEPPSFDALKIVPFQLNPHYSNYRTPGHNGETRAQRLLEFTKVEPLTPVIAIAEGSALWRRDNTLVLLGENPAYLFCGEQQEMLIPIGSDLSHLLK.

Catalysis depends on charge relay system residues S122, D137, and H159.

The protein belongs to the peptidase S51 family.

The protein localises to the cytoplasm. The enzyme catalyses Dipeptidase E catalyzes the hydrolysis of dipeptides Asp-|-Xaa. It does not act on peptides with N-terminal Glu, Asn or Gln, nor does it cleave isoaspartyl peptides.. Hydrolyzes dipeptides containing N-terminal aspartate residues. May play a role in allowing the cell to use peptide aspartate to spare carbon otherwise required for the synthesis of the aspartate family of amino acids. This Shewanella putrefaciens (strain CN-32 / ATCC BAA-453) protein is Peptidase E.